Consider the following 465-residue polypeptide: Ribulose bisphosphate carboxylase large chain (465 aa).

An N6,N6,N6-trimethyllysine modification is found at K4. Substrate contacts are provided by N113 and T163. K165 serves as the catalytic Proton acceptor. Residue K167 participates in substrate binding. 3 residues coordinate Mg(2+): K191, D193, and E194. At K191 the chain carries N6-carboxylysine. The Proton acceptor role is filled by H284. Substrate contacts are provided by R285, H317, and S369.

It belongs to the RuBisCO large chain family. Type I subfamily. As to quaternary structure, heterohexadecamer of 8 large chains and 8 small chains; disulfide-linked. The disulfide link is formed within the large subunit homodimers. Requires Mg(2+) as cofactor. The disulfide bond which can form in the large chain dimeric partners within the hexadecamer appears to be associated with oxidative stress and protein turnover.

It localises to the plastid. The protein resides in the chloroplast. The catalysed reaction is 2 (2R)-3-phosphoglycerate + 2 H(+) = D-ribulose 1,5-bisphosphate + CO2 + H2O. It carries out the reaction D-ribulose 1,5-bisphosphate + O2 = 2-phosphoglycolate + (2R)-3-phosphoglycerate + 2 H(+). Its function is as follows. RuBisCO catalyzes two reactions: the carboxylation of D-ribulose 1,5-bisphosphate, the primary event in carbon dioxide fixation, as well as the oxidative fragmentation of the pentose substrate in the photorespiration process. Both reactions occur simultaneously and in competition at the same active site. In Nepenthes alata (Winged pitcher plant), this protein is Ribulose bisphosphate carboxylase large chain.